The following is a 189-amino-acid chain: UPF0301 protein RT0098 (189 aa).

It belongs to the UPF0301 (AlgH) family.

The sequence is that of UPF0301 protein RT0098 from Rickettsia typhi (strain ATCC VR-144 / Wilmington).